We begin with the raw amino-acid sequence, 244 residues long: Cell division protein ZapD (244 aa).

Belongs to the ZapD family. Interacts with FtsZ.

It is found in the cytoplasm. In terms of biological role, cell division factor that enhances FtsZ-ring assembly. Directly interacts with FtsZ and promotes bundling of FtsZ protofilaments, with a reduction in FtsZ GTPase activity. The polypeptide is Cell division protein ZapD (Shewanella baltica (strain OS223)).